We begin with the raw amino-acid sequence, 540 residues long: Glucose-6-phosphate isomerase (540 aa).

The active-site Proton donor is Glu350. Catalysis depends on residues His381 and Lys503.

It belongs to the GPI family.

It is found in the cytoplasm. The catalysed reaction is alpha-D-glucose 6-phosphate = beta-D-fructose 6-phosphate. It participates in carbohydrate biosynthesis; gluconeogenesis. It functions in the pathway carbohydrate degradation; glycolysis; D-glyceraldehyde 3-phosphate and glycerone phosphate from D-glucose: step 2/4. Catalyzes the reversible isomerization of glucose-6-phosphate to fructose-6-phosphate. This chain is Glucose-6-phosphate isomerase, found in Burkholderia pseudomallei (strain 1710b).